A 136-amino-acid chain; its full sequence is Polyadenylate-binding protein-interacting protein 2B (136 aa).

A compositionally biased stretch (polar residues) spans 15 to 25 (NGSSVASTSPS). Disordered regions lie at residues 15–40 (NGSS…HEEK) and 107–136 (SVGD…GVKY). Basic and acidic residues predominate over residues 27-40 (KCKEDQGLNGHEEK).

The protein belongs to the PAIP2 family. As to quaternary structure, interacts (via central acidic portion and C-terminus) with PABPC1 (via the second and third RRM domains and the C-terminus). In terms of processing, ubiquitinated in vitro. As to expression, expressed at very high levels in pancreas, at high levels in testis and at moderately high levels in brain, heart and lung (at protein level).

Inhibits translation of capped and polyadenylated mRNAs by displacing PABPC1 from the poly(A) tail. This chain is Polyadenylate-binding protein-interacting protein 2B (Paip2b), found in Mus musculus (Mouse).